Reading from the N-terminus, the 407-residue chain is Tyrosine--tRNA ligase (407 aa).

Tyr35 is an L-tyrosine binding site. A 'HIGH' region motif is present at residues Pro40–His49. 2 residues coordinate L-tyrosine: Tyr168 and Gln172. The short motif at Lys228–Thr232 is the 'KMSKS' region element. Lys231 contributes to the ATP binding site. An S4 RNA-binding domain is found at Asn341–Val405.

Belongs to the class-I aminoacyl-tRNA synthetase family. TyrS type 1 subfamily. As to quaternary structure, homodimer.

Its subcellular location is the cytoplasm. The catalysed reaction is tRNA(Tyr) + L-tyrosine + ATP = L-tyrosyl-tRNA(Tyr) + AMP + diphosphate + H(+). In terms of biological role, catalyzes the attachment of tyrosine to tRNA(Tyr) in a two-step reaction: tyrosine is first activated by ATP to form Tyr-AMP and then transferred to the acceptor end of tRNA(Tyr). This Clostridium botulinum (strain ATCC 19397 / Type A) protein is Tyrosine--tRNA ligase.